The following is a 395-amino-acid chain: Flap endonuclease 1 (395 aa).

The segment at 1 to 104 (MGIKHLYQII…GELAKRFMRK (104 aa)) is N-domain. Aspartate 34 contacts Mg(2+). 2 residues coordinate DNA: arginine 47 and arginine 70. Positions 86, 158, 160, 179, and 181 each coordinate Mg(2+). Positions 122–253 (EVEKFSRRTV…NTALKLIRDH (132 aa)) are I-domain. DNA is bound at residue glutamate 158. DNA is bound by residues glycine 231 and aspartate 233. A Mg(2+)-binding site is contributed by aspartate 233. Residues 341–349 (QQSRLEGFF) form an interaction with PCNA region. Residues 360-389 (AVLKRKHEEKLELQKKKKKEDAKAKKEAKS) show a composition bias toward basic and acidic residues. The segment at 360–395 (AVLKRKHEEKLELQKKKKKEDAKAKKEAKSKPRGTT) is disordered.

Belongs to the XPG/RAD2 endonuclease family. FEN1 subfamily. As to quaternary structure, interacts with PCNA. Three molecules of FEN1 bind to one PCNA trimer with each molecule binding to one PCNA monomer. PCNA stimulates the nuclease activity without altering cleavage specificity. Mg(2+) serves as cofactor. Post-translationally, phosphorylated. Phosphorylation upon DNA damage induces relocalization to the nuclear plasma.

It localises to the nucleus. The protein resides in the nucleolus. The protein localises to the nucleoplasm. Its subcellular location is the mitochondrion. Its function is as follows. Structure-specific nuclease with 5'-flap endonuclease and 5'-3' exonuclease activities involved in DNA replication and repair. During DNA replication, cleaves the 5'-overhanging flap structure that is generated by displacement synthesis when DNA polymerase encounters the 5'-end of a downstream Okazaki fragment. It enters the flap from the 5'-end and then tracks to cleave the flap base, leaving a nick for ligation. Also involved in the long patch base excision repair (LP-BER) pathway, by cleaving within the apurinic/apyrimidinic (AP) site-terminated flap. Acts as a genome stabilization factor that prevents flaps from equilibrating into structures that lead to duplications and deletions. Also possesses 5'-3' exonuclease activity on nicked or gapped double-stranded DNA, and exhibits RNase H activity. Also involved in replication and repair of rDNA and in repairing mitochondrial DNA. This is Flap endonuclease 1 from Ajellomyces capsulatus (strain NAm1 / WU24) (Darling's disease fungus).